Reading from the N-terminus, the 218-residue chain is Probable transaldolase (218 aa).

The active-site Schiff-base intermediate with substrate is Lys-87.

It belongs to the transaldolase family. Type 3B subfamily.

The protein resides in the cytoplasm. It carries out the reaction D-sedoheptulose 7-phosphate + D-glyceraldehyde 3-phosphate = D-erythrose 4-phosphate + beta-D-fructose 6-phosphate. The protein operates within carbohydrate degradation; pentose phosphate pathway; D-glyceraldehyde 3-phosphate and beta-D-fructose 6-phosphate from D-ribose 5-phosphate and D-xylulose 5-phosphate (non-oxidative stage): step 2/3. In terms of biological role, transaldolase is important for the balance of metabolites in the pentose-phosphate pathway. The protein is Probable transaldolase of Bacteroides thetaiotaomicron (strain ATCC 29148 / DSM 2079 / JCM 5827 / CCUG 10774 / NCTC 10582 / VPI-5482 / E50).